Here is a 79-residue protein sequence, read N- to C-terminus: Putative defensin-like protein 29 (79 aa).

The signal sequence occupies residues 1-26; the sequence is MASSGKCVFLVFLCMVALLAPSEVHA. 3 cysteine pairs are disulfide-bonded: cysteine 45/cysteine 65, cysteine 51/cysteine 74, and cysteine 55/cysteine 76.

Belongs to the DEFL family.

The protein localises to the secreted. The protein is Putative defensin-like protein 29 of Arabidopsis thaliana (Mouse-ear cress).